A 620-amino-acid chain; its full sequence is MTEMRSAKIMSGRVFAGARALYRAAGVSGDDMGKKPIIAIANSFDEFLPGHVHLNKVGRIVSEAIKEAGGIPREFNTMAVDDGIAMGHTGMLYSLPSRDIIADTVEYQCNAHCADALICIPNCDKVVPGMLMAALRLNIPTVFVSGGPMEAGTTVLADGTVKSTDLIDVMYATADDSVSDEELLNYEKTVCPTCGSCAGMFTANSMNCLTEAIGLALPGNGTILASHSYRKDLFERAAKQVVKIAHQYYDDSDDSVLPRSIATKEAFENAMTMDVAMGGSTNTVLHILAMAQSADVDFTLDDIERISHTVPCICKASPSGKWEISDVHRAGGITGILGELDRAGKLHTNVHSIDYPTLEAKLADWDIMRPTCTEEAQQMYKAAPGHIISPEPWTHTTLFDSLDRDRTNGAIHDIDHPEIHEGGLAVLRGNLAPDGCVVKTAGVPPEIWKFRGPALVVDSQEQAIEVILNDTLKPGMALVIRYEGPKGGPGMQEMLYPTSFVKGKGIGKQVAMLTDGRYSGGSSGLAIGHMAPEAANKGPVALIRNGDIIDIDIEARSVNVELTDEQLDERRRELEAGDGYVAHRNRHVSQALKAYAAFARSADKGATRDPELINKLSGLD.

Residue Asp-82 coordinates Mg(2+). Cys-123 serves as a coordination point for [2Fe-2S] cluster. Residues Asp-124 and Lys-125 each contribute to the Mg(2+) site. At Lys-125 the chain carries N6-carboxylysine. Position 197 (Cys-197) interacts with [2Fe-2S] cluster. Glu-493 provides a ligand contact to Mg(2+). The active-site Proton acceptor is the Ser-519.

This sequence belongs to the IlvD/Edd family. In terms of assembly, homodimer. [2Fe-2S] cluster serves as cofactor. The cofactor is Mg(2+).

It carries out the reaction (2R)-2,3-dihydroxy-3-methylbutanoate = 3-methyl-2-oxobutanoate + H2O. It catalyses the reaction (2R,3R)-2,3-dihydroxy-3-methylpentanoate = (S)-3-methyl-2-oxopentanoate + H2O. The protein operates within amino-acid biosynthesis; L-isoleucine biosynthesis; L-isoleucine from 2-oxobutanoate: step 3/4. It functions in the pathway amino-acid biosynthesis; L-valine biosynthesis; L-valine from pyruvate: step 3/4. Functions in the biosynthesis of branched-chain amino acids. Catalyzes the dehydration of (2R,3R)-2,3-dihydroxy-3-methylpentanoate (2,3-dihydroxy-3-methylvalerate) into 2-oxo-3-methylpentanoate (2-oxo-3-methylvalerate) and of (2R)-2,3-dihydroxy-3-methylbutanoate (2,3-dihydroxyisovalerate) into 2-oxo-3-methylbutanoate (2-oxoisovalerate), the penultimate precursor to L-isoleucine and L-valine, respectively. In Bifidobacterium longum subsp. infantis (strain ATCC 15697 / DSM 20088 / JCM 1222 / NCTC 11817 / S12), this protein is Dihydroxy-acid dehydratase.